The primary structure comprises 300 residues: Enoyl-CoA hydratase domain-containing protein 3, mitochondrial (300 aa).

The transit peptide at 1–66 directs the protein to the mitochondrion; the sequence is MAVVAGLRAF…RNIVLSNPRR (66 aa). The disordered stretch occupies residues 34-53; the sequence is GSAGPAGSESEPRLTSTRQQ. K110 is subject to N6-succinyllysine.

It belongs to the enoyl-CoA hydratase/isomerase family.

It localises to the mitochondrion. Functionally, may play a role in fatty acid biosynthesis and insulin sensitivity. In Mus musculus (Mouse), this protein is Enoyl-CoA hydratase domain-containing protein 3, mitochondrial.